The following is a 134-amino-acid chain: Small ribosomal subunit protein uS11 (134 aa).

The tract at residues Met-1 to Gly-24 is disordered.

The protein belongs to the universal ribosomal protein uS11 family. As to quaternary structure, part of the 30S ribosomal subunit. Interacts with proteins S7 and S18. Binds to IF-3.

In terms of biological role, located on the platform of the 30S subunit, it bridges several disparate RNA helices of the 16S rRNA. Forms part of the Shine-Dalgarno cleft in the 70S ribosome. In Acetivibrio thermocellus (strain ATCC 27405 / DSM 1237 / JCM 9322 / NBRC 103400 / NCIMB 10682 / NRRL B-4536 / VPI 7372) (Clostridium thermocellum), this protein is Small ribosomal subunit protein uS11.